The sequence spans 234 residues: Opacity protein V28 (234 aa).

A signal peptide is located at residue A1.

The protein belongs to the opacity porin family.

It localises to the cell outer membrane. Functionally, implicated in a number of adherence functions. OPA proteins are implicated in pathogenesis and are subject to phase variation. The sequence is that of Opacity protein V28 from Neisseria gonorrhoeae.